A 476-amino-acid chain; its full sequence is tRNA-2-methylthio-N(6)-dimethylallyladenosine synthase (476 aa).

Residues 1-14 (MTEVVHLHMPEEAR) show a composition bias toward basic and acidic residues. Positions 1–20 (MTEVVHLHMPEEARATQSRD) are disordered. Positions 26-147 (RRYYVWTVGC…APNPIYQLEE (122 aa)) constitute an MTTase N-terminal domain. Positions 35, 71, 105, 170, 174, and 177 each coordinate [4Fe-4S] cluster. The 235-residue stretch at 156 to 390 (DHPPVSVHVP…ERLQEQIAAE (235 aa)) folds into the Radical SAM core domain. The TRAM domain occupies 393–453 (ARFLHQTVEV…PWSLQGVLAR (61 aa)).

This sequence belongs to the methylthiotransferase family. MiaB subfamily. In terms of assembly, monomer. [4Fe-4S] cluster is required as a cofactor.

The protein resides in the cytoplasm. It carries out the reaction N(6)-dimethylallyladenosine(37) in tRNA + (sulfur carrier)-SH + AH2 + 2 S-adenosyl-L-methionine = 2-methylsulfanyl-N(6)-dimethylallyladenosine(37) in tRNA + (sulfur carrier)-H + 5'-deoxyadenosine + L-methionine + A + S-adenosyl-L-homocysteine + 2 H(+). In terms of biological role, catalyzes the methylthiolation of N6-(dimethylallyl)adenosine (i(6)A), leading to the formation of 2-methylthio-N6-(dimethylallyl)adenosine (ms(2)i(6)A) at position 37 in tRNAs that read codons beginning with uridine. In Roseiflexus sp. (strain RS-1), this protein is tRNA-2-methylthio-N(6)-dimethylallyladenosine synthase.